A 296-amino-acid chain; its full sequence is MSAGGPRVGSVSVDSYLFSLPLVALNVGVRRRLSLFLNPRTTAAADWTSLAEEMGFEYLEIREFETRPDPTRSLLDAWQGRSGSSVGRLLELLALLDREDILYELKDRIEEDCQKYIRNQQKQESEKPLQVARVESSVPQTKELGGITTLDDPLGQTPELFDAFICYCPSDIEFVQEMIRQLEQTDYRLKLCVSDRDVLPGTCVWSIASELIEKRCRRMVVVVSDDYLQSKECDFQTKFALSLSPGVQQKRLIPIKYKAMKKDFPSILRFITICDYTNPCTKSWFWTRLAKALSLP.

The Death domain maps to 32–109; that stretch reads RLSLFLNPRT…DILYELKDRI (78 aa). The interval 110–155 is intermediate domain; sequence EEDCQKYIRNQQKQESEKPLQVARVESSVPQTKELGGITTLDDPLG. The 135-residue stretch at 159–293 folds into the TIR domain; that stretch reads ELFDAFICYC…WFWTRLAKAL (135 aa). Serine 244 bears the Phosphoserine mark.

In terms of assembly, homodimer. Also forms heterodimers with TIRAP. Binds to TLR2, TLR4, IRAK1, IRAK2 and IRAK4 via their respective TIR domains. Interacts with IL18R1. Interacts with BMX, IL1RL1, IKBKE and IRF7. Interacts with LRRFIP1 and LRRFIP2; this interaction positively regulates Toll-like receptor (TLR) signaling in response to agonist. Interacts with FLII. LRRFIP1 and LRRFIP2 compete with FLII for MYD88-binding. Interacts with IRF1. Upon IL1B treatment, forms a complex with PELI1, IRAK1, IRAK4 and TRAF6; this complex recruits MAP3K7/TAK1, TAB1 and TAB2 to mediate NF-kappa-B activation. Direct binding of SMAD6 to PELI1 prevents the complex formation and hence negatively regulates IL1R-TLR signaling and eventually NF-kappa-B-mediated gene expression. May interact with PIK3AP1. Interacts (via TIR domain) with DHX9 (via H2A and OB-fold regions); this interaction is direct. Interacts with OTUD4 deubiquitinase; the interaction is direct. Post-translationally, ubiquitinated; undergoes 'Lys-63'-linked polyubiquitination. OTUD4 specifically hydrolyzes 'Lys-63'-linked polyubiquitinated MYD88. Deubiquitinated by USP3 that cleaves 'Lys-63'-linked ubiquitin chains leading to inhibition of MYD88-induced NF-kappa-B signaling.

It localises to the cytoplasm. Its subcellular location is the nucleus. Its function is as follows. Adapter protein involved in the Toll-like receptor and IL-1 receptor signaling pathway in the innate immune response. Acts via IRAK1, IRAK2, IRF7 and TRAF6, leading to NF-kappa-B activation, cytokine secretion and the inflammatory response. Increases IL-8 transcription. Involved in IL-18-mediated signaling pathway. Activates IRF1 resulting in its rapid migration into the nucleus to mediate an efficient induction of IFN-beta, NOS2/INOS, and IL12A genes. Upon TLR8 activation by GU-rich single-stranded RNA (GU-rich RNA) derived from viruses, induces IL1B release through NLRP3 inflammasome activation. MyD88-mediated signaling in intestinal epithelial cells is crucial for maintenance of gut homeostasis and controls the expression of the antimicrobial lectin REG3G in the small intestine. The protein is Myeloid differentiation primary response protein MyD88 (Myd88) of Rattus norvegicus (Rat).